A 373-amino-acid chain; its full sequence is Integrator complex subunit 15 (373 aa).

This sequence belongs to the Integrator subunit 15 family. In terms of assembly, belongs to the multiprotein complex Integrator, at least composed of IntS1, IntS2, IntS3, IntS4, omd/IntS5, IntS6, defl/IntS7, IntS8, IntS9, IntS10, IntS11, IntS12, asun/IntS13, IntS14 and IntS15. The core complex associates with protein phosphatase 2A subunits mts/PP2A and Pp2A-29B, to form the Integrator-PP2A (INTAC) complex.

Its subcellular location is the nucleus. In terms of biological role, component of the integrator complex, a multiprotein complex that terminates RNA polymerase II (Pol II) transcription in the promoter-proximal region of genes. The integrator complex provides a quality checkpoint during transcription elongation by driving premature transcription termination of transcripts that are unfavorably configured for transcriptional elongation: the complex terminates transcription by (1) catalyzing dephosphorylation of the C-terminal domain (CTD) of Pol II subunit Rbp1 and Spt5, and (2) degrading the exiting nascent RNA transcript via endonuclease activity. The integrator complex is also involved in the 3'-end processing of the U7 snRNA, and also the spliceosomal snRNAs U1, U2, U4 and U5. In Drosophila melanogaster (Fruit fly), this protein is Integrator complex subunit 15.